A 317-amino-acid polypeptide reads, in one-letter code: Melanocyte-stimulating hormone receptor (317 aa).

Topologically, residues 1 to 37 are extracellular; it reads MAVQGFQRRLLGSLNSTPTAIPQLGLAANQTGARCLE. N29 is a glycosylation site (N-linked (GlcNAc...) asparagine). The helical transmembrane segment at 38–63 threads the bilayer; that stretch reads VSIPDGLFLSLGLVSLVENVLVVATI. Residues 64-72 are Cytoplasmic-facing; the sequence is AKNRNLHSP. The helical transmembrane segment at 73 to 93 threads the bilayer; that stretch reads TYCFICCLALSDLLVSGGNVL. Residues 94-118 lie on the Extracellular side of the membrane; the sequence is ETVVILLLEASALAARAAVVQPLDN. A helical transmembrane segment spans residues 119-140; sequence VIDVITCSSMVSSLCFLGAIAM. Over 141–163 the chain is Cytoplasmic; the sequence is DRYVSIFYALRYHSIVTLPRARQ. A helical membrane pass occupies residues 164-183; the sequence is AIAAIWVASVLFSTLFIAYY. At 184–191 the chain is on the extracellular side; sequence DHAAVLLC. A helical membrane pass occupies residues 192–211; it reads LVVFFLAMLVLMAVLYVHML. At 212–240 the chain is on the cytoplasmic side; sequence ARACQHAQGIARLHKRQRPLHQGFGLKGA. A helical membrane pass occupies residues 241–266; the sequence is VTLTILLGIFFLCWGPFFLHLTLIVL. At 267 to 279 the chain is on the extracellular side; that stretch reads CPQHPTCSCIFKN. A helical transmembrane segment spans residues 280–300; that stretch reads FNLFLTLIICNAIIDPLIYAF. Residues 301–317 are Cytoplasmic-facing; sequence RRQELRRTLKEGLTCSW. The S-palmitoyl cysteine moiety is linked to residue C315.

The protein belongs to the G-protein coupled receptor 1 family. As to quaternary structure, interacts with MGRN1, but does not undergo MGRN1-mediated ubiquitination; this interaction competes with GNAS-binding and thus inhibits agonist-induced cAMP production. Interacts with OPN3; the interaction results in a decrease in MC1R-mediated cAMP signaling and ultimately a decrease in melanin production in melanocytes.

The protein resides in the cell membrane. In terms of biological role, receptor for MSH (alpha, beta and gamma) and ACTH. The activity of this receptor is mediated by G proteins which activate adenylate cyclase. Mediates melanogenesis, the production of eumelanin (black/brown) and phaeomelanin (red/yellow), via regulation of cAMP signaling in melanocytes. This Hylobates lar (Lar gibbon) protein is Melanocyte-stimulating hormone receptor (MC1R).